A 340-amino-acid polypeptide reads, in one-letter code: Ketol-acid reductoisomerase (NADP(+)) (340 aa).

A KARI N-terminal Rossmann domain is found at Val-3–Thr-182. NADP(+) contacts are provided by residues Tyr-26–Gln-29, Arg-49, Ser-53, and Asp-83–Gln-86. Residue His-108 is part of the active site. Residue Gly-134 coordinates NADP(+). Residues Thr-183–Thr-328 form the KARI C-terminal knotted domain. Mg(2+)-binding residues include Asp-191, Glu-195, Glu-227, and Glu-231. Ser-252 is a binding site for substrate.

The protein belongs to the ketol-acid reductoisomerase family. Mg(2+) serves as cofactor.

The enzyme catalyses (2R)-2,3-dihydroxy-3-methylbutanoate + NADP(+) = (2S)-2-acetolactate + NADPH + H(+). It carries out the reaction (2R,3R)-2,3-dihydroxy-3-methylpentanoate + NADP(+) = (S)-2-ethyl-2-hydroxy-3-oxobutanoate + NADPH + H(+). It functions in the pathway amino-acid biosynthesis; L-isoleucine biosynthesis; L-isoleucine from 2-oxobutanoate: step 2/4. The protein operates within amino-acid biosynthesis; L-valine biosynthesis; L-valine from pyruvate: step 2/4. Its function is as follows. Involved in the biosynthesis of branched-chain amino acids (BCAA). Catalyzes an alkyl-migration followed by a ketol-acid reduction of (S)-2-acetolactate (S2AL) to yield (R)-2,3-dihydroxy-isovalerate. In the isomerase reaction, S2AL is rearranged via a Mg-dependent methyl migration to produce 3-hydroxy-3-methyl-2-ketobutyrate (HMKB). In the reductase reaction, this 2-ketoacid undergoes a metal-dependent reduction by NADPH to yield (R)-2,3-dihydroxy-isovalerate. This is Ketol-acid reductoisomerase (NADP(+)) from Lactococcus lactis subsp. lactis (strain IL1403) (Streptococcus lactis).